We begin with the raw amino-acid sequence, 86 residues long: Acyl carrier protein (86 aa).

Residues 5–80 form the Carrier domain; the sequence is EEILKKVQSI…EAVEFIIDKI (76 aa). Position 40 is an O-(pantetheine 4'-phosphoryl)serine (S40).

Belongs to the acyl carrier protein (ACP) family. In terms of processing, 4'-phosphopantetheine is transferred from CoA to a specific serine of apo-ACP by AcpS. This modification is essential for activity because fatty acids are bound in thioester linkage to the sulfhydryl of the prosthetic group.

It localises to the plastid. The protein localises to the chloroplast. Its pathway is lipid metabolism; fatty acid biosynthesis. Functionally, carrier of the growing fatty acid chain in fatty acid biosynthesis. The protein is Acyl carrier protein of Cyanidium caldarium (Red alga).